Reading from the N-terminus, the 367-residue chain is Serine O-succinyltransferase (367 aa).

In terms of domain architecture, AB hydrolase-1 spans 41–351 (NAVLILTGLS…SPQGHDAFLV (311 aa)). The interval 48 to 51 (GLSP) is important for substrate specificity. Serine 146 functions as the Nucleophile in the catalytic mechanism. Substrate is bound at residue arginine 215. Catalysis depends on residues aspartate 313 and histidine 346. Aspartate 347 is a substrate binding site.

The protein belongs to the AB hydrolase superfamily. MetX family. In terms of assembly, homodimer.

The protein localises to the cytoplasm. It carries out the reaction succinyl-CoA + L-serine = O-succinyl-L-serine + CoA. The catalysed reaction is L-homoserine + succinyl-CoA = O-succinyl-L-homoserine + CoA. It participates in amino-acid biosynthesis; L-cysteine biosynthesis; L-cysteine from L-serine: step 1/2. In terms of biological role, transfers a succinyl group from succinyl-CoA to L-serine, forming succinyl-L-serine. In vitro, also has homoserine succinyl transferase activity. The protein is Serine O-succinyltransferase of Frateuria aurantia (strain ATCC 33424 / DSM 6220 / KCTC 2777 / LMG 1558 / NBRC 3245 / NCIMB 13370) (Acetobacter aurantius).